Consider the following 455-residue polypeptide: MSPVSQRSLTLIGAGLAGCLLAILLSRRGWQVTVYERRGDPRIKGYESGRSINLALAERGRHALRQAGAEDAVMAKAVMMRGRMVHPLVGQPQLQRYGRDDSEVIWSIHRAALNVALLDLAEQAGARVHFYRRLHTVDFDAGYARFIDDRDDQPHEIHFQSLIGSDGAGSALRAAMQRKSPLGERTEFLDHSYKELEIPPQPGGGFRIEGNALHIWPRGRYMCIALPNDGGTFTVTLFLPNAGEPSFATTRTGDEAFALFARDFPDALPLIPQLKEHWEEHPPGLLGTLTLDRWHLDGRALLIGDAAHAMVPFHGQGMNCAFEDCVALADQLDAHDDLASAFAAFEAARRDDAAAIQQMALENYLEMRDRVDDPDFLLQRELEQQLQARWPTRFVPHYTMVTFLRTRYSIALARSEIQREILVQATRGHSDLSRIDWSALEAVVHARLEPLDGAH.

Belongs to the aromatic-ring hydroxylase family. KMO subfamily. FAD serves as cofactor.

It carries out the reaction L-kynurenine + NADPH + O2 + H(+) = 3-hydroxy-L-kynurenine + NADP(+) + H2O. It participates in cofactor biosynthesis; NAD(+) biosynthesis; quinolinate from L-kynurenine: step 1/3. Functionally, catalyzes the hydroxylation of L-kynurenine (L-Kyn) to form 3-hydroxy-L-kynurenine (L-3OHKyn). Required for synthesis of quinolinic acid. In Xanthomonas axonopodis pv. citri (strain 306), this protein is Kynurenine 3-monooxygenase.